Here is a 116-residue protein sequence, read N- to C-terminus: Aspartate 1-decarboxylase (116 aa).

S25 functions as the Schiff-base intermediate with substrate; via pyruvic acid in the catalytic mechanism. The residue at position 25 (S25) is a Pyruvic acid (Ser). T57 lines the substrate pocket. Catalysis depends on Y58, which acts as the Proton donor. A substrate-binding site is contributed by 72 to 74 (GAA).

It belongs to the PanD family. In terms of assembly, heterooctamer of four alpha and four beta subunits. Pyruvate serves as cofactor. In terms of processing, is synthesized initially as an inactive proenzyme, which is activated by self-cleavage at a specific serine bond to produce a beta-subunit with a hydroxyl group at its C-terminus and an alpha-subunit with a pyruvoyl group at its N-terminus.

It is found in the cytoplasm. The enzyme catalyses L-aspartate + H(+) = beta-alanine + CO2. It functions in the pathway cofactor biosynthesis; (R)-pantothenate biosynthesis; beta-alanine from L-aspartate: step 1/1. Functionally, catalyzes the pyruvoyl-dependent decarboxylation of aspartate to produce beta-alanine. This Helicobacter pylori (strain HPAG1) protein is Aspartate 1-decarboxylase.